The following is a 525-amino-acid chain: Nuclear polyadenylated RNA-binding protein NAB2 (525 aa).

Disordered regions lie at residues 102–160 and 196–236; these read SDIA…QLQP and QFAP…STRF. Residues 103 to 160 are compositionally biased toward low complexity; it reads DIAQQQQQQQQQQQPDIAQQQPQQQPQQQPQQQPQQQPQQQPQQQPQQQPQQQPQLQP. 9 repeat units span residues 121 to 124, 125 to 128, 129 to 132, 133 to 136, 137 to 140, 141 to 144, 145 to 148, 149 to 152, and 153 to 156. The interval 121-156 is 10 X 4 AA tandem repeats of Q-Q-Q-P; sequence QQQPQQQPQQQPQQQPQQQPQQQPQQQPQQQPQQQP. Residues 157–160 form a 10; approximate repeat; that stretch reads QLQP. An omega-N-methylarginine mark is found at Arg-209 and Arg-222. The tract at residues 209–228 is RNA-binding RGG-box; sequence RGGGAVGKNRRGGRGGNRGG. Residues 209-239 form a PY-NLS nuclear localization signal region; that stretch reads RGGGAVGKNRRGGRGGNRGGRNNNSTRFNPL. Position 254 is a phosphothreonine (Thr-254). 7 C3H1-type zinc fingers span residues 262–278, 283–300, 340–355, 371–386, 415–430, 437–452, and 458–473; these read CRLF…PHAH, CNEY…EFLH, CKFG…PFGH, CDKN…RKAH, CKFG…KYRH, CREG…LFGH, and CRFG…LFRH. The segment at 503–525 is disordered; the sequence is NAIIENAPPQTSFTHQEQDTEMN. Over residues 510-525 the composition is skewed to polar residues; sequence PPQTSFTHQEQDTEMN.

Belongs to the ZC3H14 family. Interacts with MLP1. Interacts with PUB1. In terms of processing, methylated by HMT1.

It localises to the nucleus. Its subcellular location is the cytoplasm. Functionally, RNA-binding protein involved in RNA processing and transcription regulation. Acts as a regulator of mRNA stability: binds the poly(A) tail of mRNAs and pre-mRNAs, preventing their degradation by the exosome. Involved in the biogenesis of circular RNAs (circRNAs) which are produced by back-splicing circularization of pre-mRNAs. Involved in mRNA poly(A) tail length control and nuclear export. Functions in surveillance and the packaging leading to generation of export-competent mRNPs. Controls both mRNP compaction that facilitates movement through nuclear pore complexes and the length of transcript poly(A) tails. Also acts as a regulator of transcription. Associates directly with nascent RNA polymerase II transcripts and remains associated during subsequent nuclear RNA processing reactions. Required for RNA polymerase III (RNAPIII) transcription: required for the occupancy of RNAPIII and Transcription factor IIIB (TFIIIB) at target genes, possibly via direct association with nascent RNAPIII transcripts. This Saccharomyces cerevisiae (strain ATCC 204508 / S288c) (Baker's yeast) protein is Nuclear polyadenylated RNA-binding protein NAB2.